Here is a 264-residue protein sequence, read N- to C-terminus: Probable DNA polymerase sliding clamp 2 (264 aa).

Residues 75–94 (SIAQEATVGIKISNFVRILD) mediate DNA binding.

Belongs to the PCNA family.

Its function is as follows. Sliding clamp subunit. Responsible for tethering the catalytic subunit of DNA polymerase to DNA during high-speed replication. This chain is Probable DNA polymerase sliding clamp 2, found in Paramecium bursaria Chlorella virus 1 (PBCV-1).